Here is a 230-residue protein sequence, read N- to C-terminus: Lipoprotein-releasing system ATP-binding protein LolD (230 aa).

Residues 10–228 enclose the ABC transporter domain; that stretch reads LRAEHLSKVY…QLHMANGRLL (219 aa). Residue 46-53 coordinates ATP; the sequence is GASGSGKS.

The protein belongs to the ABC transporter superfamily. Lipoprotein translocase (TC 3.A.1.125) family. The complex is composed of two ATP-binding proteins (LolD) and two transmembrane proteins (LolC and LolE).

The protein localises to the cell inner membrane. In terms of biological role, part of the ABC transporter complex LolCDE involved in the translocation of mature outer membrane-directed lipoproteins, from the inner membrane to the periplasmic chaperone, LolA. Responsible for the formation of the LolA-lipoprotein complex in an ATP-dependent manner. The protein is Lipoprotein-releasing system ATP-binding protein LolD of Bordetella avium (strain 197N).